A 237-amino-acid polypeptide reads, in one-letter code: F-box only protein 50 (237 aa).

Residues 31–231 (VFETKPFERN…VTDSSVIVKA (201 aa)) enclose the FBA domain. Residues 40-82 (NLLQNPSPYGVNHTVPPPEPHRSGIPPPSDRPPQLEPEGNFSG) are disordered. Residues 64 to 74 (IPPPSDRPPQL) show a composition bias toward pro residues.

As to expression, expressed in nonspecific cytotoxic cells (NCC).

It is found in the cytoplasm. Its function is as follows. May promote cell proliferation. This Danio rerio (Zebrafish) protein is F-box only protein 50 (nccrp1).